A 291-amino-acid polypeptide reads, in one-letter code: Bifunctional protein FolD (291 aa).

NADP(+)-binding positions include 165–167 (GRS), S190, and I231.

This sequence belongs to the tetrahydrofolate dehydrogenase/cyclohydrolase family. In terms of assembly, homodimer.

The enzyme catalyses (6R)-5,10-methylene-5,6,7,8-tetrahydrofolate + NADP(+) = (6R)-5,10-methenyltetrahydrofolate + NADPH. It catalyses the reaction (6R)-5,10-methenyltetrahydrofolate + H2O = (6R)-10-formyltetrahydrofolate + H(+). Its pathway is one-carbon metabolism; tetrahydrofolate interconversion. Its function is as follows. Catalyzes the oxidation of 5,10-methylenetetrahydrofolate to 5,10-methenyltetrahydrofolate and then the hydrolysis of 5,10-methenyltetrahydrofolate to 10-formyltetrahydrofolate. In Azoarcus sp. (strain BH72), this protein is Bifunctional protein FolD.